We begin with the raw amino-acid sequence, 252 residues long: Maintenance of carboxysome distribution protein A (252 aa).

ATP contacts are provided by Gly11, Gly12, Gly14, Lys15, Thr16, Thr17, Gln41, Glu147, Lys151, Phe182, Arg183, Leu216, Glu217, and Ser218. Thr16 serves as a coordination point for Mg(2+).

Belongs to the ParA family. McdA subfamily. In terms of assembly, self-associates (probably a homodimer), interacts with McdB probably via the C-terminus of both proteins. Shows no signs of filament formation. Homodimerizes in the presence of ATP, making extra nucleotide contacts than with ADP or AMP-PNP. Each subunit binds 1 ATP molecule; Glu-147, Lys-151 and Arg-183 cross the dimer interface to contact ATP in the other subunit, while Phe-182, Arg-183 and Phe-221 stack with the adenine base in their own subunit.

The protein resides in the cytoplasm. The protein localises to the nucleoid. The enzyme catalyses ATP + H2O = ADP + phosphate + H(+). McdA and McdB together mediate carboxysome (Cb) spacing, size, ultrastructure and probably inheritance in the cell. Together they prevent Cb aggregation. McdA is an ATPase that forms dynamic gradients on the nucleoid in response to adapter protein McdB, which associates with carboxysomes. The interplay between McdA gradients on the nucleoid and McdB-bound carboxysomes result in the equal spacing of Cbs along the cell length. Binds nucleoid DNA in an ATP-dependent manner; neither ADP nor ATP-gamma-S support DNA binding. Upon ATP-binding dimerizes and binds nucleoid DNA; the (McdA-ATP)2 dimer transiently binds McdB-bound Cbs. McdA's ATPase activity is stimulated 2-fold by DNA and McdB; ATP hydrolysis causes McdA release from DNA. Overexpression leads to loss of McdA oscillation, diffuse nucleoid staining by McdA with formation of large carboxysome aggregates that are in regions depleted of McdA; McdA remains nucleoid-associated. Functionally, mutagenesis studies (characterized in vivo) suggest ATP binding, protein dimerization and a conformational change are necessary for nucleoid DNA-binding and binding to McdB-bound Cbs, which tethers Cbs to the nucleoid. Eventual McdB-stimulated ATP hydrolysis causes de-dimerization of McdA which no longer binds the nucleoid and releases McdB and Cbs. McdB-bound Cbs then move to a region of higher McdA concentration, distributing Cbs across the nucleoid. In terms of biological role, incorrect positioning (aggregation) of carboxysomes results in reduced CO(2) fixation by encapsulated ribulose-1,5-bisphosphate carboxylase (RuBisCO, cbbL/cbbS), which leads to slower growth, cell elongation, asymmetric cell division and an increase in RuBisCO levels. The polypeptide is Maintenance of carboxysome distribution protein A (Synechococcus elongatus (strain ATCC 33912 / PCC 7942 / FACHB-805) (Anacystis nidulans R2)).